Here is a 433-residue protein sequence, read N- to C-terminus: Glutamate-1-semialdehyde 2,1-aminomutase (433 aa).

Lys272 is subject to N6-(pyridoxal phosphate)lysine.

Belongs to the class-III pyridoxal-phosphate-dependent aminotransferase family. HemL subfamily. As to quaternary structure, homodimer. Pyridoxal 5'-phosphate is required as a cofactor.

It localises to the cytoplasm. It catalyses the reaction (S)-4-amino-5-oxopentanoate = 5-aminolevulinate. It participates in porphyrin-containing compound metabolism; protoporphyrin-IX biosynthesis; 5-aminolevulinate from L-glutamyl-tRNA(Glu): step 2/2. This Magnetococcus marinus (strain ATCC BAA-1437 / JCM 17883 / MC-1) protein is Glutamate-1-semialdehyde 2,1-aminomutase.